A 533-amino-acid chain; its full sequence is Putative adhesin P1-like protein MPN_409 (533 aa).

Disordered stretches follow at residues 15–45 (KNHR…GSRS) and 92–166 (SGWR…SITP). Low complexity predominate over residues 28 to 45 (TGAGSSSGTSTNTSGSRS). Basic and acidic residues predominate over residues 95-107 (RNDKNGQSDENHT).

It belongs to the adhesin P1 family.

This Mycoplasma pneumoniae (strain ATCC 29342 / M129 / Subtype 1) (Mycoplasmoides pneumoniae) protein is Putative adhesin P1-like protein MPN_409.